The chain runs to 235 residues: Elongation factor Tu, chloroplastic (235 aa).

Residues 1-125 (KNMITGAAQM…AVDEYIPTPV (125 aa)) enclose the tr-type G domain. 47-50 (NKQD) lines the GTP pocket.

This sequence belongs to the TRAFAC class translation factor GTPase superfamily. Classic translation factor GTPase family. EF-Tu/EF-1A subfamily.

It localises to the plastid. It is found in the chloroplast. The catalysed reaction is GTP + H2O = GDP + phosphate + H(+). In terms of biological role, GTP hydrolase that promotes the GTP-dependent binding of aminoacyl-tRNA to the A-site of ribosomes during protein biosynthesis. In Gracilariopsis lemaneiformis (Red alga), this protein is Elongation factor Tu, chloroplastic (tufA).